The sequence spans 235 residues: Leucyl/phenylalanyl-tRNA--protein transferase (235 aa).

It belongs to the L/F-transferase family.

The protein localises to the cytoplasm. The enzyme catalyses N-terminal L-lysyl-[protein] + L-leucyl-tRNA(Leu) = N-terminal L-leucyl-L-lysyl-[protein] + tRNA(Leu) + H(+). It carries out the reaction N-terminal L-arginyl-[protein] + L-leucyl-tRNA(Leu) = N-terminal L-leucyl-L-arginyl-[protein] + tRNA(Leu) + H(+). The catalysed reaction is L-phenylalanyl-tRNA(Phe) + an N-terminal L-alpha-aminoacyl-[protein] = an N-terminal L-phenylalanyl-L-alpha-aminoacyl-[protein] + tRNA(Phe). In terms of biological role, functions in the N-end rule pathway of protein degradation where it conjugates Leu, Phe and, less efficiently, Met from aminoacyl-tRNAs to the N-termini of proteins containing an N-terminal arginine or lysine. The sequence is that of Leucyl/phenylalanyl-tRNA--protein transferase from Methylococcus capsulatus (strain ATCC 33009 / NCIMB 11132 / Bath).